The sequence spans 558 residues: Polypeptide N-acetylgalactosaminyltransferase 16 (558 aa).

Over 1-6 the chain is Cytoplasmic; the sequence is MRKIRA. The helical; Signal-anchor for type II membrane protein transmembrane segment at 7–26 threads the bilayer; the sequence is NAIAILTVAWILGTFYYLWQ. At 27–558 the chain is on the lumenal side; that stretch reads DNRAHAASSG…AQQWQLLPHT (532 aa). Positions 33–54 are disordered; that stretch reads ASSGGRGAQRAGRRSEQLREDR. Over residues 45-54 the composition is skewed to basic and acidic residues; the sequence is RRSEQLREDR. 5 disulfide bridges follow: Cys-113/Cys-340, Cys-331/Cys-409, Cys-441/Cys-460, Cys-486/Cys-506, and Cys-530/Cys-543. The catalytic subdomain A stretch occupies residues 122–227; sequence LPATSVIITF…TEWLPPMLQR (106 aa). Positions 163 and 188 each coordinate substrate. Position 211 (Asp-211) interacts with Mn(2+). Residue Ser-212 coordinates substrate. Position 213 (His-213) interacts with Mn(2+). The tract at residues 286–348 is catalytic subdomain B; the sequence is PIRTPVIAGG…PCSRVGHVFR (63 aa). Trp-317 provides a ligand contact to substrate. His-345 is a Mn(2+) binding site. Substrate-binding residues include Arg-348, His-351, and Tyr-353. A Ricin B-type lectin domain is found at 428-555; that stretch reads KEALPGIIKQ…DAQAQQWQLL (128 aa).

This sequence belongs to the glycosyltransferase 2 family. GalNAc-T subfamily. Mn(2+) serves as cofactor.

The protein localises to the golgi apparatus membrane. The enzyme catalyses L-seryl-[protein] + UDP-N-acetyl-alpha-D-galactosamine = a 3-O-[N-acetyl-alpha-D-galactosaminyl]-L-seryl-[protein] + UDP + H(+). The catalysed reaction is L-threonyl-[protein] + UDP-N-acetyl-alpha-D-galactosamine = a 3-O-[N-acetyl-alpha-D-galactosaminyl]-L-threonyl-[protein] + UDP + H(+). It participates in protein modification; protein glycosylation. Functionally, catalyzes the initial reaction in O-linked oligosaccharide biosynthesis, the transfer of an N-acetyl-D-galactosamine residue to a serine or threonine residue on the protein receptor. This is Polypeptide N-acetylgalactosaminyltransferase 16 (GALNT16) from Homo sapiens (Human).